A 603-amino-acid chain; its full sequence is MSSEHIQNKLALLPDQPGCYLMKDRQGTIIYVGKAKILKNRVRSYFSGTHDSKTQRLVQEIVDFEYIVTSSNVEALLLEINLIKKHDPRFNIRLKDDKTYPFIKITNERHPRLIITRQVKKDKGKYFGPYPNVYAANEVKRILDRLYPLRKCSTLPNKVCLYYHLGQCLAPCVFDVEASKYKEMQDEIVAFLNGGYKTVKNDLMKKMQEAAENMEFEKAGEFRDQINAIETTMEKQKMTMNDFVDRDVFGYAIDKGWMCVQVFFIRQGKLIERDVSQFPFYNDADEDFLTFIGQFYQKANHIPPKEIYLPDDVDSEAVQAVVPDTKIIVPQRGNKKDLVKLAYKNAKIALNEKFMLLERNEERTVGAVERLGEAMGIPTPSRVEAFDNSNIHGTDPVSAMVTFLDGKPSKNDYRKYKIKTVEGPDDYATMREVIRRRYWRVLKEELPMPDLILIDGGKGQIDSAKDVLTNELGLDIPVAGLAKDDKHRTSQLLFGDPLEIVPLERNSQEFYLLQRMQDEVHRFAITFHRQLRSKTGFQSILDGIPGVGPGRKKKLLKHFGSMKKLKEASVEEIKEAGVPLNVAEEVHKHITAFNEKAKNTEQK.

Positions 15-92 (DQPGCYLMKD…IKKHDPRFNI (78 aa)) constitute a GIY-YIG domain. The UVR domain occupies 197 to 232 (KTVKNDLMKKMQEAAENMEFEKAGEFRDQINAIETT).

It belongs to the UvrC family. Interacts with UvrB in an incision complex.

The protein localises to the cytoplasm. Its function is as follows. The UvrABC repair system catalyzes the recognition and processing of DNA lesions. UvrC both incises the 5' and 3' sides of the lesion. The N-terminal half is responsible for the 3' incision and the C-terminal half is responsible for the 5' incision. The chain is UvrABC system protein C from Listeria monocytogenes serotype 4b (strain CLIP80459).